Reading from the N-terminus, the 626-residue chain is ATP-dependent RNA helicase cyt-19, mitochondrial (626 aa).

The Q motif signature appears at 74-103; that stretch reads ADLAALGVHENVVRAITHGMGYENMTEVQS. Residues 106–297 enclose the Helicase ATP-binding domain; the sequence is ISPALKGKDI…RSYIDKNNFE (192 aa). 119–126 contributes to the ATP binding site; the sequence is AKTGTGKT. The short motif at 241-244 is the DEAD box element; that stretch reads DEAD. One can recognise a Helicase C-terminal domain in the interval 329-493; it reads AMLELIEKAL…CASVNAADSG (165 aa). A disordered region spans residues 569–626; that stretch reads LRVETREHSMRPMGSGPGHRRDFNSRGPRRQSDDPFENALHRAQDLDRRPTRRQQASF. The RNA-binding stretch occupies residues 578-626; the sequence is MRPMGSGPGHRRDFNSRGPRRQSDDPFENALHRAQDLDRRPTRRQQASF. Basic and acidic residues predominate over residues 607 to 617; it reads ALHRAQDLDRR.

This sequence belongs to the DEAD box helicase family.

Its subcellular location is the mitochondrion matrix. The catalysed reaction is ATP + H2O = ADP + phosphate + H(+). With respect to regulation, activated by exposed helices in a group I intron RNA. Its function is as follows. Acts as an RNA chaperone to resolve non-native structures formed during RNA folding to promote mitochondrial group I, but also group II, intron splicing. Functions predominantly by disrupting accessible RNA secondary structure and depends on spontaneous openings in tightly packed RNAs to gain access to RNA helices. This is ATP-dependent RNA helicase cyt-19, mitochondrial from Neurospora crassa (strain ATCC 24698 / 74-OR23-1A / CBS 708.71 / DSM 1257 / FGSC 987).